The primary structure comprises 285 residues: Bifunctional protein FolD (285 aa).

Residues 166-168 (GAS) and Ile232 each bind NADP(+).

It belongs to the tetrahydrofolate dehydrogenase/cyclohydrolase family. As to quaternary structure, homodimer.

The enzyme catalyses (6R)-5,10-methylene-5,6,7,8-tetrahydrofolate + NADP(+) = (6R)-5,10-methenyltetrahydrofolate + NADPH. It catalyses the reaction (6R)-5,10-methenyltetrahydrofolate + H2O = (6R)-10-formyltetrahydrofolate + H(+). It participates in one-carbon metabolism; tetrahydrofolate interconversion. Catalyzes the oxidation of 5,10-methylenetetrahydrofolate to 5,10-methenyltetrahydrofolate and then the hydrolysis of 5,10-methenyltetrahydrofolate to 10-formyltetrahydrofolate. The chain is Bifunctional protein FolD from Pseudoalteromonas atlantica (strain T6c / ATCC BAA-1087).